We begin with the raw amino-acid sequence, 61 residues long: Large ribosomal subunit protein uL30 (61 aa).

Belongs to the universal ribosomal protein uL30 family. As to quaternary structure, part of the 50S ribosomal subunit.

The polypeptide is Large ribosomal subunit protein uL30 (Latilactobacillus sakei subsp. sakei (strain 23K) (Lactobacillus sakei subsp. sakei)).